Consider the following 525-residue polypeptide: Glutamate--cysteine ligase (525 aa).

The protein belongs to the glutamate--cysteine ligase type 1 family. Type 1 subfamily.

The catalysed reaction is L-cysteine + L-glutamate + ATP = gamma-L-glutamyl-L-cysteine + ADP + phosphate + H(+). It participates in sulfur metabolism; glutathione biosynthesis; glutathione from L-cysteine and L-glutamate: step 1/2. This is Glutamate--cysteine ligase from Vibrio vulnificus (strain YJ016).